Reading from the N-terminus, the 110-residue chain is Protein C-ets-2 (110 aa).

A DNA-binding region (ETS) is located at residues Ser-1 to Val-84.

Belongs to the ETS family.

The protein localises to the nucleus. In terms of biological role, probable transcription factor. The chain is Protein C-ets-2 (ETS-2) from Lytechinus variegatus (Green sea urchin).